Here is a 67-residue protein sequence, read N- to C-terminus: COP9 signalosome complex subunit 9 homolog (67 aa).

Residues methionine 1 to methionine 31 are disordered.

Belongs to the CSN9 family. Probable component of the COP9 signalosome (CSN) complex.

In terms of biological role, component of the COP9 signalosome complex (CSN), a complex involved in various cellular and developmental processes. The CSN complex is an essential regulator of the ubiquitin (Ubl) conjugation pathway by mediating the deneddylation of the cullin subunits of SCF-type E3 ligase complexes, leading to decrease the Ubl ligase activity. This chain is COP9 signalosome complex subunit 9 homolog, found in Drosophila melanogaster (Fruit fly).